Consider the following 116-residue polypeptide: Small ribosomal subunit protein bS6 (116 aa).

A disordered region spans residues 94–116 (ESITEPSPLTKPKEDRKGDSEAA). The span at 104-116 (KPKEDRKGDSEAA) shows a compositional bias: basic and acidic residues.

This sequence belongs to the bacterial ribosomal protein bS6 family.

Its function is as follows. Binds together with bS18 to 16S ribosomal RNA. This Idiomarina loihiensis (strain ATCC BAA-735 / DSM 15497 / L2-TR) protein is Small ribosomal subunit protein bS6.